Reading from the N-terminus, the 286-residue chain is Non-homologous end joining protein Ku (286 aa).

Residues 10 to 175 (TVGLVSFPVR…EEVREPDFVV (166 aa)) enclose the Ku domain. The span at 226-242 (ERQERQRREAGEVRQAD) shows a compositional bias: basic and acidic residues. Residues 226-270 (ERQERQRREAGEVRQADETDEAAETEVPEVDIPASRAPGETGGEL) form a disordered region. Residues 243-254 (ETDEAAETEVPE) show a composition bias toward acidic residues.

Belongs to the prokaryotic Ku family. As to quaternary structure, homodimer. Interacts with LigD.

Its function is as follows. With LigD forms a non-homologous end joining (NHEJ) DNA repair enzyme, which repairs dsDNA breaks with reduced fidelity. Binds linear dsDNA with 5'- and 3'- overhangs but not closed circular dsDNA nor ssDNA. Recruits and stimulates the ligase activity of LigD. This chain is Non-homologous end joining protein Ku, found in Actinosynnema mirum (strain ATCC 29888 / DSM 43827 / JCM 3225 / NBRC 14064 / NCIMB 13271 / NRRL B-12336 / IMRU 3971 / 101).